Here is a 276-residue protein sequence, read N- to C-terminus: Dermonecrotic toxin LlSicTox-alphaIV2iii (276 aa).

Histidine 5 is an active-site residue. Mg(2+)-binding residues include glutamate 25 and aspartate 27. Histidine 41 acts as the Nucleophile in catalysis. Intrachain disulfides connect cysteine 45/cysteine 51 and cysteine 47/cysteine 193. Aspartate 85 provides a ligand contact to Mg(2+).

The protein belongs to the arthropod phospholipase D family. Class II subfamily. The cofactor is Mg(2+). In terms of tissue distribution, expressed by the venom gland.

Its subcellular location is the secreted. It carries out the reaction an N-(acyl)-sphingosylphosphocholine = an N-(acyl)-sphingosyl-1,3-cyclic phosphate + choline. It catalyses the reaction an N-(acyl)-sphingosylphosphoethanolamine = an N-(acyl)-sphingosyl-1,3-cyclic phosphate + ethanolamine. The enzyme catalyses a 1-acyl-sn-glycero-3-phosphocholine = a 1-acyl-sn-glycero-2,3-cyclic phosphate + choline. The catalysed reaction is a 1-acyl-sn-glycero-3-phosphoethanolamine = a 1-acyl-sn-glycero-2,3-cyclic phosphate + ethanolamine. In terms of biological role, dermonecrotic toxins cleave the phosphodiester linkage between the phosphate and headgroup of certain phospholipids (sphingolipid and lysolipid substrates), forming an alcohol (often choline) and a cyclic phosphate. This toxin acts on sphingomyelin (SM). It may also act on ceramide phosphoethanolamine (CPE), lysophosphatidylcholine (LPC) and lysophosphatidylethanolamine (LPE), but not on lysophosphatidylserine (LPS), and lysophosphatidylglycerol (LPG). It acts by transphosphatidylation, releasing exclusively cyclic phosphate products as second products. Induces dermonecrosis, hemolysis, increased vascular permeability, edema, inflammatory response, and platelet aggregation. In Loxosceles laeta (South American recluse spider), this protein is Dermonecrotic toxin LlSicTox-alphaIV2iii.